Consider the following 191-residue polypeptide: dTTP/UTP pyrophosphatase (191 aa).

The active-site Proton acceptor is the D75.

The protein belongs to the Maf family. YhdE subfamily. A divalent metal cation is required as a cofactor.

The protein resides in the cytoplasm. It carries out the reaction dTTP + H2O = dTMP + diphosphate + H(+). It catalyses the reaction UTP + H2O = UMP + diphosphate + H(+). Functionally, nucleoside triphosphate pyrophosphatase that hydrolyzes dTTP and UTP. May have a dual role in cell division arrest and in preventing the incorporation of modified nucleotides into cellular nucleic acids. The sequence is that of dTTP/UTP pyrophosphatase from Aliivibrio fischeri (strain ATCC 700601 / ES114) (Vibrio fischeri).